Consider the following 452-residue polypeptide: Putative tripartite motif-containing protein 49B (452 aa).

Residues 15-56 form an RING-type zinc finger; the sequence is CPICMNYFIDPVTIDCGHSFCRPCFYLNWKDSPFLVQCSECT. Residues 88–129 form a B box-type zinc finger; sequence SEEQMCGTHRETKKMFCEVDRSLLCLLCSSSQEHRDHRHCPI. 4 residues coordinate Zn(2+): cysteine 93, histidine 96, cysteine 115, and histidine 121. The 184-residue stretch at 269–452 folds into the B30.2/SPRY domain; it reads ELSAGPITGL…LRPIFCCIHF (184 aa).

Belongs to the TRIM/RBCC family.

This chain is Putative tripartite motif-containing protein 49B (TRIM49B), found in Homo sapiens (Human).